The primary structure comprises 437 residues: Eukaryotic peptide chain release factor subunit 1 (437 aa).

An NIKS motif; plays an important role in translational termination motif is present at residues 61–64; sequence NIKS.

The protein belongs to the eukaryotic release factor 1 family. Component of the eRF1-eRF3-GTP ternary complex, composed of ETF1/ERF1 and eRF3 (GSPT1/ERF3A or GSPT2/ERF3B) and GTP.

The protein resides in the cytoplasm. Component of the eRF1-eRF3-GTP ternary complex, a ternary complex that mediates translation termination in response to the termination codons. The eRF1-eRF3-GTP complex binds to a stop codon in the ribosomal A-site. ETF1/ERF1 is responsible for stop codon recognition and inducing hydrolysis of peptidyl-tRNA. Following GTP hydrolysis, eRF3 (GSPT1/ERF3A or GSPT2/ERF3B) dissociates, permitting ETF1/eRF1 to accommodate fully in the A-site, followed by hydrolysis of peptidyl-tRNA. The sequence is that of Eukaryotic peptide chain release factor subunit 1 (etf1) from Xenopus tropicalis (Western clawed frog).